Reading from the N-terminus, the 1381-residue chain is Hepatocyte growth factor receptor (1381 aa).

The signal sequence occupies residues 1–24 (MKAPAVLAPGILVLLFTLVQKSDG). Residues 25-934 (ECKEALVKSE…VQPDQNFTGL (910 aa)) lie on the Extracellular side of the membrane. One can recognise a Sema domain in the interval 27 to 515 (KEALVKSEMN…TGKKITKIPL (489 aa)). Asn45 carries N-linked (GlcNAc...) asparagine glycosylation. 4 disulfides stabilise this stretch: Cys95–Cys101, Cys98–Cys160, Cys133–Cys141, and Cys172–Cys175. The N-linked (GlcNAc...) asparagine glycan is linked to Asn106. 2 N-linked (GlcNAc...) asparagine glycosylation sites follow: Asn202 and Asn358. Cystine bridges form between Cys298/Cys363 and Cys385/Cys397. N-linked (GlcNAc...) asparagine glycosylation is found at Asn399, Asn405, and Asn449. Cystine bridges form between Cys520–Cys538, Cys526–Cys561, Cys529–Cys545, and Cys541–Cys551. Residue Asn553 is glycosylated (N-linked (GlcNAc...) asparagine). IPT/TIG domains lie at 563-655 (PTIY…FSYV), 657-739 (PIIT…FSYR), and 742-836 (PIVY…LIYV). The O-linked (Man) threonine glycan is linked to Thr582. Residues Asn607 and Asn635 are each glycosylated (N-linked (GlcNAc...) asparagine). Thr676 and Thr761 each carry an O-linked (Man) threonine glycan. Asn785, Asn879, and Asn930 each carry an N-linked (GlcNAc...) asparagine glycan. A helical transmembrane segment spans residues 935-955 (IVGVVSISIILLLLLGLFLWL). Residues 956–1381 (KRRKQIKDLG…QDNVDGEVDT (426 aa)) lie on the Cytoplasmic side of the membrane. Ser966 bears the Phosphoserine mark. Thr977 bears the Phosphothreonine mark. A phosphoserine mark is found at Ser990, Ser997, and Ser1000. Phosphotyrosine is present on Tyr1003. The 268-residue stretch at 1078–1345 (VHFNEVIGRG…RISAIFSTFI (268 aa)) folds into the Protein kinase domain. Residues 1084–1092 (IGRGHFGCV) and Lys1110 contribute to the ATP site. Asp1204 serves as the catalytic Proton acceptor. The interaction with RANBP9 stretch occupies residues 1212–1381 (LDEKFTVKVA…QDNVDGEVDT (170 aa)). A Phosphotyrosine modification is found at Tyr1230. Residues Tyr1234 and Tyr1235 each carry the phosphotyrosine; by autocatalysis modification. Position 1289 is a phosphothreonine (Thr1289). The tract at residues 1320 to 1359 (WHPKAELRPSFSELVSRISAIFSTFIGEHYVHVNATYVNV) is interaction with MUC20. A phosphotyrosine; by autocatalysis mark is found at Tyr1349 and Tyr1356. A Phosphotyrosine modification is found at Tyr1365.

The protein belongs to the protein kinase superfamily. Tyr protein kinase family. As to quaternary structure, heterodimer made of an alpha chain (50 kDa) and a beta chain (145 kDa) which are disulfide linked. Binds PLXNB1. Interacts when phosphorylated with downstream effectors including STAT3, PIK3R1, SRC, PCLG1, GRB2 and GAB1. Interacts with SPSB1, SPSB2 and SPSB4. Interacts with INPP5D/SHIP1. When phosphorylated at Tyr-1356, interacts with INPPL1/SHIP2. Interacts with RANBP9 and RANBP10, as well as SPSB1, SPSB2, SPSB3 and SPSB4. SPSB1 binding occurs in the presence and in the absence of HGF, however HGF treatment has a positive effect on this interaction. Interacts with MUC20; prevents interaction with GRB2 and suppresses hepatocyte growth factor-induced cell proliferation. Interacts with GRB10. Interacts with PTPN1 and PTPN2. Interacts with HSP90AA1 and HSP90AB1; the interaction suppresses MET kinase activity. Interacts with tensin TNS3. Interacts (when phosphorylated) with tensin TNS4 (via SH2 domain); the interaction increases MET protein stability by inhibiting MET endocytosis and subsequent lysosomal degradation. Post-translationally, autophosphorylated in response to ligand binding on Tyr-1234 and Tyr-1235 in the kinase domain leading to further phosphorylation of Tyr-1349 and Tyr-1356 in the C-terminal multifunctional docking site. Dephosphorylated by PTPRJ at Tyr-1349 and Tyr-1365. Dephosphorylated by PTPN1 and PTPN2. Ubiquitinated. Ubiquitination by CBL regulates the receptor stability and activity through proteasomal degradation. In terms of processing, O-mannosylation of IPT/TIG domains by TMEM260 is required for protein maturation. O-mannosylated residues are composed of single mannose glycans that are not elongated or modified.

Its subcellular location is the membrane. The enzyme catalyses L-tyrosyl-[protein] + ATP = O-phospho-L-tyrosyl-[protein] + ADP + H(+). Its activity is regulated as follows. In its inactive state, the C-terminal tail interacts with the catalytic domain and inhibits the kinase activity. Upon ligand binding, the C-terminal tail is displaced and becomes phosphorylated, thus increasing the kinase activity. Receptor tyrosine kinase that transduces signals from the extracellular matrix into the cytoplasm by binding to hepatocyte growth factor/HGF ligand. Regulates many physiological processes including proliferation, scattering, morphogenesis and survival. Ligand binding at the cell surface induces autophosphorylation of MET on its intracellular domain that provides docking sites for downstream signaling molecules. Following activation by ligand, interacts with the PI3-kinase subunit PIK3R1, PLCG1, SRC, GRB2, STAT3 or the adapter GAB1. Recruitment of these downstream effectors by MET leads to the activation of several signaling cascades including the RAS-ERK, PI3 kinase-AKT, or PLCgamma-PKC. The RAS-ERK activation is associated with the morphogenetic effects while PI3K/AKT coordinates prosurvival effects. During embryonic development, MET signaling plays a role in gastrulation, development and migration of muscles and neuronal precursors, angiogenesis and kidney formation. In adults, participates in wound healing as well as organ regeneration and tissue remodeling. Also promotes differentiation and proliferation of hematopoietic cells. The chain is Hepatocyte growth factor receptor (MET) from Equus caballus (Horse).